A 353-amino-acid polypeptide reads, in one-letter code: Lactosylceramide 4-alpha-galactosyltransferase (353 aa).

The Cytoplasmic portion of the chain corresponds to 1 to 22 (MSKPPDLLLRLLRGAPRQRVCT). A helical; Signal-anchor for type II membrane protein membrane pass occupies residues 23–43 (LFIIGFKFTFFVSIMIYWHVV). Residues 44 to 353 (GEPKEKGQLY…TTHEAMKMYL (310 aa)) lie on the Lumenal side of the membrane. An N-linked (GlcNAc...) asparagine glycan is attached at Asn-121. The DXD motif signature appears at 192-194 (DTD). The N-linked (GlcNAc...) asparagine glycan is linked to Asn-203.

Belongs to the glycosyltransferase 32 family.

Its subcellular location is the golgi apparatus membrane. It carries out the reaction a beta-D-Gal-(1-&gt;4)-beta-D-Glc-(1&lt;-&gt;1)-Cer(d18:1(4E)) + UDP-alpha-D-galactose = a globoside Gb3Cer (d18:1(4E)) + UDP + H(+). It catalyses the reaction a beta-D-Gal-(1&lt;-&gt;1')-ceramide + UDP-alpha-D-galactose = alpha-D-Gal-(1-&gt;4)-beta-D-Gal-(1&lt;-&gt;1')-Cer + UDP + H(+). Its pathway is glycolipid biosynthesis. Its function is as follows. Catalyzes the transfer of galactose from UDP-alpha-D-galactose to lactosylceramide/beta-D-galactosyl-(1-&gt;4)-beta-D-glucosyl-(1&lt;-&gt;1)-ceramide(d18:1(4E)) to produce globotriaosylceramide/globoside Gb3Cer (d18:1(4E)). Also able to transfer galactose to galactosylceramide/beta-D-Gal-(1&lt;-&gt;1')-Cer. Globoside Gb3Cer is a glycosphingolipid of the globo serie, one of the major types of neutral root structures of glycosphingolipids, that constitute a significant portion of mammalian cell membranes. This Pan troglodytes (Chimpanzee) protein is Lactosylceramide 4-alpha-galactosyltransferase (A4GALT).